Consider the following 896-residue polypeptide: Chromatin assembly factor 1 subunit A-A (896 aa).

Disordered regions lie at residues 1–23 (MPGK…KKMV), 185–377 (TSTS…EEEK), and 552–610 (DSDE…DPEN). Residues 10-21 (VMQSSTKSNTKK) show a composition bias toward polar residues. The span at 211 to 226 (ASVSSSSSPVSLSSPD) shows a compositional bias: low complexity. The span at 227-236 (AQTGSQFRNR) shows a compositional bias: polar residues. Residues 237 to 246 (SSPSTSTTPT) show a composition bias toward low complexity. Over residues 255–284 (SADKNKTKDKDKQRQAEKEERERAKKEARS) the composition is skewed to basic and acidic residues. Residues 285–302 (AKKKKRQGLLKNLQRKRG) are compositionally biased toward basic residues. Basic and acidic residues predominate over residues 308–377 (SGKEYKKEKK…EEKRLKEEEK (70 aa)). Composition is skewed to acidic residues over residues 552-563 (DSDEEWEEEEPG), 572-586 (ENDD…DDDG), and 595-607 (SDDE…ECTD). The segment at 642–678 (CVWWDSKASEISLLQKFSACILESPAVDEELAQEISS) is necessary for homodimerization, competence for chromatin assembly. A disordered region spans residues 724-743 (SDAAGNESTSPNVTPQTPSN). The segment covering 729-743 (NESTSPNVTPQTPSN) has biased composition (polar residues).

The protein belongs to the CHAF1A family. Homodimer.

The protein localises to the nucleus. In terms of biological role, involved in chromatin assembly in DNA replication and DNA repair. This is Chromatin assembly factor 1 subunit A-A (chaf1a-a) from Xenopus laevis (African clawed frog).